A 131-amino-acid polypeptide reads, in one-letter code: Sec-independent protein translocase protein TatB (131 aa).

The chain crosses the membrane as a helical span at residues 2–22; the sequence is LGSLSWEHMLVLVVVGLVVLG. Residues 96–131 are disordered; that stretch reads AFDRPVNGAAAQPPPAPAPPPEPHRSGQTPFDADAT. Residues 107–116 are compositionally biased toward pro residues; the sequence is QPPPAPAPPP.

This sequence belongs to the TatB family. The Tat system comprises two distinct complexes: a TatABC complex, containing multiple copies of TatA, TatB and TatC subunits, and a separate TatA complex, containing only TatA subunits. Substrates initially bind to the TatABC complex, which probably triggers association of the separate TatA complex to form the active translocon.

It is found in the cell membrane. In terms of biological role, part of the twin-arginine translocation (Tat) system that transports large folded proteins containing a characteristic twin-arginine motif in their signal peptide across membranes. Together with TatC, TatB is part of a receptor directly interacting with Tat signal peptides. TatB may form an oligomeric binding site that transiently accommodates folded Tat precursor proteins before their translocation. The sequence is that of Sec-independent protein translocase protein TatB from Mycolicibacterium paratuberculosis (strain ATCC BAA-968 / K-10) (Mycobacterium paratuberculosis).